We begin with the raw amino-acid sequence, 112 residues long: Large ribosomal subunit protein P1 (112 aa).

Positions 71 to 90 (PAQAAAAAPAGGAPAAAAPA) are enriched in low complexity. The tract at residues 71 to 112 (PAQAAAAAPAGGAPAAAAPAESKEGRRSQGESDDDMGFGLLD) is disordered. Residues 91-100 (ESKEGRRSQG) are compositionally biased toward basic and acidic residues.

This sequence belongs to the eukaryotic ribosomal protein P1/P2 family. In terms of assembly, P1 and P2 exist as dimers at the large ribosomal subunit.

Plays an important role in the elongation step of protein synthesis. This is Large ribosomal subunit protein P1 (rpl-21) from Oscheius tipulae.